We begin with the raw amino-acid sequence, 218 residues long: Octanoyltransferase (218 aa).

A BPL/LPL catalytic domain is found at 27-210 (AGAEETLYLL…QFRAIFADST (184 aa)). Residues 72–79 (RGGNITCH), 139–141 (SIG), and 152–154 (GFA) contribute to the substrate site. C170 serves as the catalytic Acyl-thioester intermediate.

This sequence belongs to the LipB family.

Its subcellular location is the cytoplasm. The enzyme catalyses octanoyl-[ACP] + L-lysyl-[protein] = N(6)-octanoyl-L-lysyl-[protein] + holo-[ACP] + H(+). Its pathway is protein modification; protein lipoylation via endogenous pathway; protein N(6)-(lipoyl)lysine from octanoyl-[acyl-carrier-protein]: step 1/2. In terms of biological role, catalyzes the transfer of endogenously produced octanoic acid from octanoyl-acyl-carrier-protein onto the lipoyl domains of lipoate-dependent enzymes. Lipoyl-ACP can also act as a substrate although octanoyl-ACP is likely to be the physiological substrate. The protein is Octanoyltransferase of Nitratidesulfovibrio vulgaris (strain DSM 19637 / Miyazaki F) (Desulfovibrio vulgaris).